The sequence spans 567 residues: Potassium-transporting ATPase potassium-binding subunit (567 aa).

A run of 12 helical transmembrane segments spans residues 3–23 (MIGW…TKPL), 64–84 (LTYT…IYGV), 136–156 (GLTH…MALI), 179–199 (LYVL…QGIP), 220–240 (VGPV…GGFF), 254–274 (LSNF…TNVF), 285–305 (WAIL…TYWA), 330–350 (FGLV…CGAV), 374–394 (IIVG…VLAI), 420–440 (AMLA…VGVV), 488–508 (LASA…AIAG), and 527–547 (GGLF…LTFF).

The protein belongs to the KdpA family. The system is composed of three essential subunits: KdpA, KdpB and KdpC.

Its subcellular location is the cell inner membrane. Its function is as follows. Part of the high-affinity ATP-driven potassium transport (or Kdp) system, which catalyzes the hydrolysis of ATP coupled with the electrogenic transport of potassium into the cytoplasm. This subunit binds the periplasmic potassium ions and delivers the ions to the membrane domain of KdpB through an intramembrane tunnel. The polypeptide is Potassium-transporting ATPase potassium-binding subunit (Bradyrhizobium diazoefficiens (strain JCM 10833 / BCRC 13528 / IAM 13628 / NBRC 14792 / USDA 110)).